Here is a 304-residue protein sequence, read N- to C-terminus: Acetylglutamate kinase (304 aa).

Residues Gly82–Gly83, Arg104, and Asn197 contribute to the substrate site.

This sequence belongs to the acetylglutamate kinase family. ArgB subfamily.

It is found in the cytoplasm. It catalyses the reaction N-acetyl-L-glutamate + ATP = N-acetyl-L-glutamyl 5-phosphate + ADP. It functions in the pathway amino-acid biosynthesis; L-arginine biosynthesis; N(2)-acetyl-L-ornithine from L-glutamate: step 2/4. Its function is as follows. Catalyzes the ATP-dependent phosphorylation of N-acetyl-L-glutamate. This Prochlorococcus marinus (strain NATL2A) protein is Acetylglutamate kinase.